The primary structure comprises 706 residues: Phenylalanine--tRNA ligase beta subunit, chloroplastic (706 aa).

The B5 domain maps to 300-388; that stretch reads KVLKPIVLNY…RLHGFNNFLT (89 aa). D366, D372, E375, and E376 together coordinate Mg(2+). The FDX-ACB domain occupies 612–705; it reads SVYPKIVKDL…LELKVQAILR (94 aa).

This sequence belongs to the phenylalanyl-tRNA synthetase beta subunit family. Type 1 subfamily. In terms of assembly, tetramer of two alpha and two beta subunits. Mg(2+) is required as a cofactor.

Its subcellular location is the plastid. It is found in the chloroplast. The catalysed reaction is tRNA(Phe) + L-phenylalanine + ATP = L-phenylalanyl-tRNA(Phe) + AMP + diphosphate + H(+). The chain is Phenylalanine--tRNA ligase beta subunit, chloroplastic from Phaeodactylum tricornutum (strain CCAP 1055/1).